The sequence spans 289 residues: Dehydrodolichyl diphosphate synthase 4 (289 aa).

The chain crosses the membrane as a helical span at residues 2–22 (LSMLWFLLSLLSLLLLPCLRP).

The protein belongs to the UPP synthase family. Requires Mg(2+) as cofactor.

Its subcellular location is the endoplasmic reticulum membrane. It functions in the pathway protein modification; protein glycosylation. In terms of biological role, catalyzes cis-prenyl chain elongation to produce the polyprenyl backbone of dolichol, a glycosyl carrier-lipid required for the biosynthesis of several classes of glycoprotein. The polypeptide is Dehydrodolichyl diphosphate synthase 4 (Arabidopsis thaliana (Mouse-ear cress)).